A 162-amino-acid chain; its full sequence is Cyanate hydratase (162 aa).

Catalysis depends on residues R90, E93, and S116.

Belongs to the cyanase family.

The catalysed reaction is cyanate + hydrogencarbonate + 3 H(+) = NH4(+) + 2 CO2. In terms of biological role, catalyzes the reaction of cyanate with bicarbonate to produce ammonia and carbon dioxide. The sequence is that of Cyanate hydratase from Populus trichocarpa (Western balsam poplar).